The following is a 351-amino-acid chain: Phosphoribosylformylglycinamidine cyclo-ligase (351 aa).

Belongs to the AIR synthase family.

It localises to the cytoplasm. The enzyme catalyses 2-formamido-N(1)-(5-O-phospho-beta-D-ribosyl)acetamidine + ATP = 5-amino-1-(5-phospho-beta-D-ribosyl)imidazole + ADP + phosphate + H(+). It participates in purine metabolism; IMP biosynthesis via de novo pathway; 5-amino-1-(5-phospho-D-ribosyl)imidazole from N(2)-formyl-N(1)-(5-phospho-D-ribosyl)glycinamide: step 2/2. In Burkholderia multivorans (strain ATCC 17616 / 249), this protein is Phosphoribosylformylglycinamidine cyclo-ligase.